A 150-amino-acid polypeptide reads, in one-letter code: Flagellar assembly factor FliW (150 aa).

This sequence belongs to the FliW family. Interacts with translational regulator CsrA. Interacts with flagellins FlaB1, FlaB2 and FlaB3.

The protein localises to the cytoplasm. Acts as an anti-CsrA protein, binds CsrA and prevents it from repressing translation of its target genes, one of which is flagellin. Binds to flagellin and participates in the assembly of the flagellum. Functionally, binds to the C-terminal region of flagellin, which is implicated in polymerization, and participates in the assembly of the flagellum. This is Flagellar assembly factor FliW from Treponema pallidum (strain Nichols).